The following is a 445-amino-acid chain: Putative ankyrin repeat protein L797 (445 aa).

ANK repeat units follow at residues 73 to 102 (FMED…DIYS), 285 to 314 (NHEH…ELVG), 315 to 344 (NLYI…DIRQ), and 346 to 375 (LDAF…IINI).

The polypeptide is Putative ankyrin repeat protein L797 (Acanthamoeba polyphaga (Amoeba)).